The primary structure comprises 471 residues: Alpha-galactosidase (471 aa).

The N-terminal stretch at 1 to 18 is a signal peptide; the sequence is MFNLNFFNYTCHCEWCFW. A disulfide bridge links Cys-42 with Cys-74. The N-linked (GlcNAc...) asparagine glycan is linked to Asn-43. Substrate contacts are provided by Asp-72 and Asp-73. Asn-105 carries an N-linked (GlcNAc...) asparagine glycan. Cys-121 and Cys-151 form a disulfide bridge. Residue Lys-147 participates in substrate binding. Asp-149 serves as the catalytic Nucleophile. The N-linked (GlcNAc...) asparagine glycan is linked to Asn-175. Arg-205 lines the substrate pocket. Asp-209 (proton donor) is an active-site residue. 2 cysteine pairs are disulfide-bonded: Cys-221–Cys-237 and Cys-223–Cys-230. Gln-251 lines the substrate pocket. Asn-270, Asn-370, Asn-403, Asn-417, Asn-422, and Asn-454 each carry an N-linked (GlcNAc...) asparagine glycan.

This sequence belongs to the glycosyl hydrolase 27 family. In terms of assembly, homotetramer.

It localises to the secreted. It catalyses the reaction Hydrolysis of terminal, non-reducing alpha-D-galactose residues in alpha-D-galactosides, including galactose oligosaccharides, galactomannans and galactolipids.. The polypeptide is Alpha-galactosidase (MEL) (Saccharomyces paradoxus (Yeast)).